A 476-amino-acid chain; its full sequence is Aspartyl/glutamyl-tRNA(Asn/Gln) amidotransferase subunit B (476 aa).

Belongs to the GatB/GatE family. GatB subfamily. Heterotrimer of A, B and C subunits.

The enzyme catalyses L-glutamyl-tRNA(Gln) + L-glutamine + ATP + H2O = L-glutaminyl-tRNA(Gln) + L-glutamate + ADP + phosphate + H(+). The catalysed reaction is L-aspartyl-tRNA(Asn) + L-glutamine + ATP + H2O = L-asparaginyl-tRNA(Asn) + L-glutamate + ADP + phosphate + 2 H(+). Allows the formation of correctly charged Asn-tRNA(Asn) or Gln-tRNA(Gln) through the transamidation of misacylated Asp-tRNA(Asn) or Glu-tRNA(Gln) in organisms which lack either or both of asparaginyl-tRNA or glutaminyl-tRNA synthetases. The reaction takes place in the presence of glutamine and ATP through an activated phospho-Asp-tRNA(Asn) or phospho-Glu-tRNA(Gln). The sequence is that of Aspartyl/glutamyl-tRNA(Asn/Gln) amidotransferase subunit B from Neisseria meningitidis serogroup B (strain ATCC BAA-335 / MC58).